The following is a 448-amino-acid chain: Trigger factor (448 aa).

The PPIase FKBP-type domain occupies 172–257 (GDRVTVDFVG…MKKIEWPHLP (86 aa)).

Belongs to the FKBP-type PPIase family. Tig subfamily.

The protein resides in the cytoplasm. The catalysed reaction is [protein]-peptidylproline (omega=180) = [protein]-peptidylproline (omega=0). Involved in protein export. Acts as a chaperone by maintaining the newly synthesized protein in an open conformation. Functions as a peptidyl-prolyl cis-trans isomerase. The protein is Trigger factor of Burkholderia cenocepacia (strain ATCC BAA-245 / DSM 16553 / LMG 16656 / NCTC 13227 / J2315 / CF5610) (Burkholderia cepacia (strain J2315)).